A 172-amino-acid polypeptide reads, in one-letter code: Stellate protein CG33238 (172 aa).

This sequence belongs to the casein kinase 2 subunit beta family. In terms of assembly, interacts in vitro with the casein kinase 2 alpha subunit (CkII-alpha). The relevance of such interaction is however unclear in vivo. As to expression, probably not expressed in wild-type flies. In males lacking the Y chromosome, it is testis-specific and constitutes the main component of star-shaped crystals.

Its function is as follows. Unknown. In males lacking the Y chromosome, its strong overexpression leads to the appearance of proteinaceous star-shaped crystals in the primary spermatocytes causing meiotic drive, possibly by interfering with normal casein kinase 2 activity. This chain is Stellate protein CG33238 (Ste:CG33238), found in Drosophila melanogaster (Fruit fly).